The sequence spans 73 residues: Mu-scoloptoxin(15)-Ssd1a (73 aa).

A signal peptide spans 1-20; the sequence is MKFHIIFCLLAALMMTSAFA.

Contains 2 disulfide bonds. Expressed by the venom gland.

The protein localises to the secreted. Voltage-gated sodium channel inhibitor. The sequence is that of Mu-scoloptoxin(15)-Ssd1a from Scolopendra dehaani (Thai centipede).